A 432-amino-acid polypeptide reads, in one-letter code: Metacaspase-1 (432 aa).

The segment covering 1–11 (MEVMDHHHHTS) has biased composition (basic residues). Disordered regions lie at residues 1 to 21 (MEVM…TTRR) and 41 to 87 (PQPG…PNAP). Residues 12 to 21 (STRPNPTTRR) are compositionally biased toward low complexity. Residues 46 to 74 (GAPPPQGGYGYPQPPPPQQPYGYSQPPPQ) show a composition bias toward pro residues. Active-site residues include histidine 223 and cysteine 279.

This sequence belongs to the peptidase C14B family.

Involved in cell death (apoptosis). The protein is Metacaspase-1 (casA) of Sclerotinia sclerotiorum (strain ATCC 18683 / 1980 / Ss-1) (White mold).